A 332-amino-acid chain; its full sequence is Capsular polysaccharide phosphotransferase WcwK (332 aa).

The protein belongs to the stealth family.

The polypeptide is Capsular polysaccharide phosphotransferase WcwK (wcwK) (Streptococcus pneumoniae).